Here is a 189-residue protein sequence, read N- to C-terminus: Thermostable direct hemolysin-related (189 aa).

The signal sequence occupies residues 1–24 (MKYRYFAKKSFLFISMLAAFKTFA). A disulfide bond links cysteine 175 and cysteine 185.

It belongs to the TDH hemolysin family. As to quaternary structure, homodimer.

Bacterial hemolysins are exotoxins that attack blood cell membranes and cause cell rupture by mechanisms not clearly defined. This Vibrio parahaemolyticus protein is Thermostable direct hemolysin-related (tdh3).